Reading from the N-terminus, the 183-residue chain is Translation initiation factor IF-3 (183 aa).

Belongs to the IF-3 family. As to quaternary structure, monomer.

It localises to the cytoplasm. Functionally, IF-3 binds to the 30S ribosomal subunit and shifts the equilibrium between 70S ribosomes and their 50S and 30S subunits in favor of the free subunits, thus enhancing the availability of 30S subunits on which protein synthesis initiation begins. This chain is Translation initiation factor IF-3, found in Serratia marcescens.